Reading from the N-terminus, the 376-residue chain is Proteasome-interacting protein CIC1 (376 aa).

Disordered stretches follow at residues 1–29 (MAKKSNSKKSTPVSTPSKEKKKVIEKKSS) and 356–376 (RSSSELEKESSESEAVKKAKS). The interval 310–376 (ETHEDDMVTI…ESEAVKKAKS (67 aa)) is required for interaction with CDC4. Positions 357–376 (SSSELEKESSESEAVKKAKS) are enriched in basic and acidic residues.

Interacts with CDC4, PRE4, PRE6, RPT1 and SCL1 as part of the fully assembled 26S proteasome. Interacts with pre-ribosomal particles constituent NOP7.

The protein resides in the nucleus. The protein localises to the nucleolus. Its function is as follows. An adapter protein that specifically links the 26S proteasome to its substrate CDC4 which is one of the substrate recognition subunits of the SCF E3 ubiquitin ligase complex. Required for turnover of cell cycle regulatory proteins CDC4 and GRR1. Required for synthesis and nuclear export of 60S ribosomal subunits. Required for vegetative growth. In Saccharomyces cerevisiae (strain ATCC 204508 / S288c) (Baker's yeast), this protein is Proteasome-interacting protein CIC1 (CIC1).